The chain runs to 283 residues: MEMO1 family protein MK0963 (283 aa).

This sequence belongs to the MEMO1 family.

The chain is MEMO1 family protein MK0963 from Methanopyrus kandleri (strain AV19 / DSM 6324 / JCM 9639 / NBRC 100938).